Consider the following 353-residue polypeptide: Basic membrane protein C (353 aa).

A signal peptide spans 1–16 (MFKRFIFITLSLLVFA). Cysteine 17 carries the N-palmitoyl cysteine lipid modification. Cysteine 17 is lipidated: S-diacylglycerol cysteine.

This sequence belongs to the BMP lipoprotein family. Monomer.

The protein localises to the cell inner membrane. Functionally, may be part of an ABC-type nucleoside uptake system involved in the purine salvage pathway. This Borreliella burgdorferi (strain ATCC 35210 / DSM 4680 / CIP 102532 / B31) (Borrelia burgdorferi) protein is Basic membrane protein C (bmpC).